We begin with the raw amino-acid sequence, 257 residues long: Snake venom serine protease KN11 (257 aa).

An N-terminal signal peptide occupies residues 1-18; it reads MVLIRVLANLLILQLSYA. Positions 19–24 are excised as a propeptide; that stretch reads QKSSEL. Residues 25–248 form the Peptidase S1 domain; sequence VTGGHPCNIN…HLDWIKSIIA (224 aa). 6 cysteine pairs are disulfide-bonded: Cys-31–Cys-162, Cys-49–Cys-65, Cys-97–Cys-255, Cys-141–Cys-209, Cys-173–Cys-188, and Cys-199–Cys-224. Residues His-64 and Asp-109 each act as charge relay system in the active site. Residues Asn-120 and Asn-121 are each glycosylated (N-linked (GlcNAc...) asparagine). Ser-203 (charge relay system) is an active-site residue.

The protein belongs to the peptidase S1 family. Snake venom subfamily. Monomer. In terms of tissue distribution, expressed by the venom gland.

It is found in the secreted. Its function is as follows. Snake venom serine protease that may act in the hemostasis system of the prey. The polypeptide is Snake venom serine protease KN11 (Trimeresurus stejnegeri (Chinese green tree viper)).